The chain runs to 274 residues: Dermonecrotic toxin SdSicTox-betaIIB1bix (274 aa).

Histidine 5 is a catalytic residue. Mg(2+) contacts are provided by glutamate 25 and aspartate 27. The active-site Nucleophile is histidine 41. 2 disulfides stabilise this stretch: cysteine 45/cysteine 51 and cysteine 47/cysteine 190. Position 85 (aspartate 85) interacts with Mg(2+).

The protein belongs to the arthropod phospholipase D family. Class II subfamily. Mg(2+) is required as a cofactor. Expressed by the venom gland.

The protein resides in the secreted. The enzyme catalyses an N-(acyl)-sphingosylphosphocholine = an N-(acyl)-sphingosyl-1,3-cyclic phosphate + choline. It catalyses the reaction an N-(acyl)-sphingosylphosphoethanolamine = an N-(acyl)-sphingosyl-1,3-cyclic phosphate + ethanolamine. The catalysed reaction is a 1-acyl-sn-glycero-3-phosphocholine = a 1-acyl-sn-glycero-2,3-cyclic phosphate + choline. It carries out the reaction a 1-acyl-sn-glycero-3-phosphoethanolamine = a 1-acyl-sn-glycero-2,3-cyclic phosphate + ethanolamine. In terms of biological role, dermonecrotic toxins cleave the phosphodiester linkage between the phosphate and headgroup of certain phospholipids (sphingolipid and lysolipid substrates), forming an alcohol (often choline) and a cyclic phosphate. This toxin acts on sphingomyelin (SM). It may also act on ceramide phosphoethanolamine (CPE), lysophosphatidylcholine (LPC) and lysophosphatidylethanolamine (LPE), but not on lysophosphatidylserine (LPS), and lysophosphatidylglycerol (LPG). It acts by transphosphatidylation, releasing exclusively cyclic phosphate products as second products. Induces dermonecrosis, hemolysis, increased vascular permeability, edema, inflammatory response, and platelet aggregation. The protein is Dermonecrotic toxin SdSicTox-betaIIB1bix of Sicarius cf. damarensis (strain GJB-2008) (Six-eyed sand spider).